Reading from the N-terminus, the 657-residue chain is MTLTACEVTAAEAPFDRVSKTIPHPLSWGAALWSVVSVRWATVALLLFLAGLVAQLNGAPEAMWWTLYLACYLAGGWGSAWAGAQALRNKALDVDLLMIAAAVGAVAIGQIFDGALLIVIFATSGALDDIATRHTAESVKGLLDLAPDQAVVVQGDGSERVVAASELVVGDRVVVRPGDRIPADGAVLSGASDVDQRSITGESMPVAKARGDEVFAGTVNGSGVLHLVVTRDPSQTVVARIVELVADASATKAKTQLFIEKIEQRYSLGMVAATLALIVIPLMFGADLRPVLLRAMTFMIVASPCAVVLATMPPLLSAIANAGRHGVLVKSAVVVERLADTSIVALDKTGTLTRGIPRLASVAPLDPNVVDARRLLQLAAAAEQSSEHPLGRAIVAEARRRGIAIPPAKDFRAVPGCGVHALVGNDFVEIASPQSYRGAPLAELAPLLSAGATAAIVLLDGVAIGVLGLTDQLRPDAVESVAAMAALTAAPPVLLTGDNGRAAWRVARNAGITDVRAALLPEQKVEVVRNLQAGGHQVLLVGDGVNDAPAMAAARAAVAMGAGADLTLQTADGVTIRDELHTIPTIIGLARQARRVVTVNLAIAATFIAVLVLWDLFGQLPLPLGVVGHEGSTVLVALNGMRLLTNRSWRAAASAAR.

5 consecutive transmembrane segments (helical) span residues 40 to 60 (WATV…NGAP), 62 to 82 (AMWW…SAWA), 101 to 121 (AAVG…IVIF), 268 to 288 (LGMV…GADL), and 299 to 319 (MIVA…LSAI). Residue D347 is the 4-aspartylphosphate intermediate of the active site. 2 residues coordinate Mg(2+): D543 and D547. Residues 596–618 (VVTVNLAIAATFIAVLVLWDLFG) form a helical membrane-spanning segment.

Belongs to the cation transport ATPase (P-type) (TC 3.A.3) family. Type IB subfamily.

It is found in the cell membrane. In terms of biological role, involved in heavy metal homeostasis. Probably exports nickel and cobalt ions out of the cell. The polypeptide is Probable cobalt/nickel-exporting P-type ATPase (ctpD) (Mycobacterium bovis (strain ATCC BAA-935 / AF2122/97)).